A 29-amino-acid chain; its full sequence is Glucagon (29 aa).

It belongs to the glucagon family.

The protein resides in the secreted. Its function is as follows. Glucagon plays a key role in glucose metabolism and homeostasis. Regulates blood glucose by increasing gluconeogenesis and decreasing glycolysis. The polypeptide is Glucagon (gcg) (Lampetra fluviatilis (European river lamprey)).